The chain runs to 172 residues: Shikimate kinase (172 aa).

14-19 (GAGKST) is an ATP binding site. A Mg(2+)-binding site is contributed by Ser18. Residues Asp36, Arg60, and Gly82 each contribute to the substrate site. ATP is bound at residue Arg120. Substrate is bound at residue Arg139. Gln156 contributes to the ATP binding site.

It belongs to the shikimate kinase family. In terms of assembly, monomer. Mg(2+) serves as cofactor.

Its subcellular location is the cytoplasm. The enzyme catalyses shikimate + ATP = 3-phosphoshikimate + ADP + H(+). It participates in metabolic intermediate biosynthesis; chorismate biosynthesis; chorismate from D-erythrose 4-phosphate and phosphoenolpyruvate: step 5/7. Its function is as follows. Catalyzes the specific phosphorylation of the 3-hydroxyl group of shikimic acid using ATP as a cosubstrate. This is Shikimate kinase from Vibrio vulnificus (strain CMCP6).